The chain runs to 568 residues: DNA mismatch repair protein MutL (568 aa).

The protein belongs to the DNA mismatch repair MutL/HexB family.

Its function is as follows. This protein is involved in the repair of mismatches in DNA. It is required for dam-dependent methyl-directed DNA mismatch repair. May act as a 'molecular matchmaker', a protein that promotes the formation of a stable complex between two or more DNA-binding proteins in an ATP-dependent manner without itself being part of a final effector complex. The sequence is that of DNA mismatch repair protein MutL from Thermosipho africanus (strain TCF52B).